Here is an 817-residue protein sequence, read N- to C-terminus: DNA ligase (817 aa).

Residues 45–49 (DVEYD), 94–95 (SI), and Glu-131 contribute to the NAD(+) site. Catalysis depends on Lys-133, which acts as the N6-AMP-lysine intermediate. NAD(+) is bound by residues Arg-154, Glu-193, Lys-311, and Lys-335. The Zn(2+) site is built by Cys-444, Cys-447, Cys-462, and Cys-468. The region spanning 733 to 817 (AEEGVLDGKT…LLKKPAGDQA (85 aa)) is the BRCT domain.

It belongs to the NAD-dependent DNA ligase family. LigA subfamily. Mg(2+) serves as cofactor. The cofactor is Mn(2+).

It carries out the reaction NAD(+) + (deoxyribonucleotide)n-3'-hydroxyl + 5'-phospho-(deoxyribonucleotide)m = (deoxyribonucleotide)n+m + AMP + beta-nicotinamide D-nucleotide.. DNA ligase that catalyzes the formation of phosphodiester linkages between 5'-phosphoryl and 3'-hydroxyl groups in double-stranded DNA using NAD as a coenzyme and as the energy source for the reaction. It is essential for DNA replication and repair of damaged DNA. This Ralstonia pickettii (strain 12J) protein is DNA ligase.